The following is a 105-amino-acid chain: MVNVPKARRTFCDGKCRKHTNHKVTQYKKGKESKFAQGRRRYDRKQSGFGGQTKPIFRKKAKTTKKIVLRMECTECKHKKQLPIKRCKHFELGGQKKSRGQVIQF.

A disordered region spans residues 23-61 (KVTQYKKGKESKFAQGRRRYDRKQSGFGGQTKPIFRKKA).

The protein belongs to the eukaryotic ribosomal protein eL42 family.

In Caenorhabditis elegans, this protein is Large ribosomal subunit protein eL42.